The sequence spans 145 residues: Ribonuclease VapC24 (145 aa).

The region spanning 4-123 (IDTNILLYAQ…RHHGVDEFAT (120 aa)) is the PINc domain. Mg(2+)-binding residues include Asp-5 and Asp-106.

The protein belongs to the PINc/VapC protein family. Mg(2+) is required as a cofactor.

Toxic component of a type II toxin-antitoxin (TA) system. An RNase. Its cognate antitoxin is VapB24. The polypeptide is Ribonuclease VapC24 (Mycobacterium tuberculosis (strain CDC 1551 / Oshkosh)).